A 206-amino-acid chain; its full sequence is Small ribosomal subunit protein uS4 (206 aa).

Residues 96 to 156 (GRLDNVVYRM…EKAKKQSRVK (61 aa)) form the S4 RNA-binding domain.

Belongs to the universal ribosomal protein uS4 family. Part of the 30S ribosomal subunit. Contacts protein S5. The interaction surface between S4 and S5 is involved in control of translational fidelity.

In terms of biological role, one of the primary rRNA binding proteins, it binds directly to 16S rRNA where it nucleates assembly of the body of the 30S subunit. Its function is as follows. With S5 and S12 plays an important role in translational accuracy. The sequence is that of Small ribosomal subunit protein uS4 from Yersinia enterocolitica serotype O:8 / biotype 1B (strain NCTC 13174 / 8081).